A 104-amino-acid chain; its full sequence is uncharacterized protein (104 aa).

Residues 55–104 (RPFSSDRINRPFSPDKKGEPIFPDKRDRPFSPDRINRPFSPDKKGEPIFP) are disordered.

Its subcellular location is the plastid. This is an uncharacterized protein from Euglena longa (Euglenophycean alga).